The chain runs to 263 residues: HTH-type transcriptional repressor NanR (263 aa).

Residues 1-24 (MSPMNAFDSQTEDSSPAIGRNLRS) form a disordered region. Positions 30 to 98 (KKLSEMVEEE…NGERARVSRP (69 aa)) constitute an HTH gntR-type domain. Positions 58–77 (ERELMAFFNVGRPSVREALA) form a DNA-binding region, H-T-H motif.

Belongs to the NanR family.

Functionally, transcriptional repressor that controls expression of the genes required for the catabolism of sialic acids. The chain is HTH-type transcriptional repressor NanR from Escherichia coli O127:H6 (strain E2348/69 / EPEC).